The following is a 37-amino-acid chain: uncharacterized protein (37 aa).

This is an uncharacterized protein from Saccharomyces cerevisiae (strain ATCC 204508 / S288c) (Baker's yeast).